Reading from the N-terminus, the 209-residue chain is uncharacterized protein (209 aa).

Over residues 1–15 the composition is skewed to basic and acidic residues; that stretch reads MHRIDTKTAQKDKFG. A disordered region spans residues 1-34; that stretch reads MHRIDTKTAQKDKFGAGKNGFTRGNPQTGTPATD. The span at 22 to 31 shows a compositional bias: polar residues; sequence TRGNPQTGTP.

The protein to E.coli YfdL and M.jannaschii MJ0347.

This is an uncharacterized protein from Escherichia coli (strain K12).